Reading from the N-terminus, the 328-residue chain is D-cysteine desulfhydrase (328 aa).

An N6-(pyridoxal phosphate)lysine modification is found at K51.

The protein belongs to the ACC deaminase/D-cysteine desulfhydrase family. In terms of assembly, homodimer. Requires pyridoxal 5'-phosphate as cofactor.

The catalysed reaction is D-cysteine + H2O = hydrogen sulfide + pyruvate + NH4(+) + H(+). Its function is as follows. Catalyzes the alpha,beta-elimination reaction of D-cysteine and of several D-cysteine derivatives. It could be a defense mechanism against D-cysteine. This Shigella boydii serotype 18 (strain CDC 3083-94 / BS512) protein is D-cysteine desulfhydrase.